The chain runs to 142 residues: Large ribosomal subunit protein uL13 (142 aa).

This sequence belongs to the universal ribosomal protein uL13 family. As to quaternary structure, part of the 50S ribosomal subunit.

This protein is one of the early assembly proteins of the 50S ribosomal subunit, although it is not seen to bind rRNA by itself. It is important during the early stages of 50S assembly. The chain is Large ribosomal subunit protein uL13 from Vibrio cholerae serotype O1 (strain M66-2).